Here is a 90-residue protein sequence, read N- to C-terminus: Elongation factor 1-beta (90 aa).

This sequence belongs to the EF-1-beta/EF-1-delta family.

Its function is as follows. Promotes the exchange of GDP for GTP in EF-1-alpha/GDP, thus allowing the regeneration of EF-1-alpha/GTP that could then be used to form the ternary complex EF-1-alpha/GTP/AAtRNA. The polypeptide is Elongation factor 1-beta (Sulfolobus acidocaldarius (strain ATCC 33909 / DSM 639 / JCM 8929 / NBRC 15157 / NCIMB 11770)).